We begin with the raw amino-acid sequence, 289 residues long: Cell division protein ZipA (289 aa).

Position 1 (M1) is a topological domain, periplasmic. Residues 2 to 22 (DIGLREWLIVIGLIVIAGILF) traverse the membrane as a helical segment. The Cytoplasmic segment spans residues 23 to 289 (DGWRRMRGGK…HERRSLMQKR (267 aa)). The tract at residues 65–141 (HREPSFDEQD…KEREKAPAVA (77 aa)) is disordered. Residues 81–99 (RETKERKGGKRQEEPRQGD) show a composition bias toward basic and acidic residues. Residues 100 to 114 (LDLDEGLALEADPSD) are compositionally biased toward acidic residues.

It belongs to the ZipA family. Interacts with FtsZ via their C-terminal domains.

It localises to the cell inner membrane. Essential cell division protein that stabilizes the FtsZ protofilaments by cross-linking them and that serves as a cytoplasmic membrane anchor for the Z ring. Also required for the recruitment to the septal ring of downstream cell division proteins. The chain is Cell division protein ZipA from Pseudomonas aeruginosa (strain UCBPP-PA14).